Here is a 56-residue protein sequence, read N- to C-terminus: Turripeptide XIV-01 (56 aa).

An N-terminal signal peptide occupies residues Met1 to Ala21. Positions Lys22 to Glu30 are excised as a propeptide.

Post-translationally, contains 2 disulfide bonds. In terms of tissue distribution, expressed by the venom duct.

It is found in the secreted. This Gemmula speciosa (Splendid gem-turris) protein is Turripeptide XIV-01.